Here is a 1522-residue protein sequence, read N- to C-terminus: Sodium channel protein 1 brain (1522 aa).

The Cytoplasmic segment spans residues 1-50; it reads MDEKYTAKNRDKTFVVIEKRFKKNIIHRFSAKRSLFLFTPRNPIRRLAVC. An I repeat occupies 41–342; the sequence is RNPIRRLAVC…VATAYELEVK (302 aa). Residues 51–70 traverse the membrane as a helical segment; it reads IATNVCFDYFLMFTIMINCV. Topologically, residues 71 to 77 are extracellular; the sequence is FLAMPDI. The helical transmembrane segment at 78–99 threads the bilayer; the sequence is SEFAEYIFLGIYTMEMAIKLVA. Over 100-112 the chain is Cytoplasmic; it reads GGFFIDKYTYLRD. Residues 113-134 form a helical membrane-spanning segment; it reads AWNCLDFTVIMISYITLLLQTI. The Extracellular portion of the chain corresponds to 135 to 143; it reads NDKVISDIT. A helical; Voltage-sensor membrane pass occupies residues 144 to 167; sequence GLRTFRVLRALRTLSIIPGLKTMV. The Cytoplasmic segment spans residues 168 to 179; sequence NALLRALRMLIS. The helical transmembrane segment at 180–201 threads the bilayer; sequence VLILILFCLWIFSQAGVQLFGG. Residues 202 to 278 lie on the Extracellular side of the membrane; the sequence is ALRHKCVLQI…PNYGYTNFDS (77 aa). A disulfide bond links Cys207 and Cys255. Asn248 and Asn258 each carry an N-linked (GlcNAc...) asparagine glycan. The segment at residues 279–303 is an intramembrane region (pore-forming); that stretch reads IGWSMLISFQLLTQDYWEDVYNKVI. The Extracellular segment spans residues 304-308; it reads RAHSP. The chain crosses the membrane as a helical span at residues 309–331; sequence WTVIYFIVINFFGSLYLMNLMLA. Topologically, residues 332–406 are cytoplasmic; that stretch reads VVATAYELEV…WLRVQSFAHC (75 aa). One copy of the II repeat lies at 393-647; that stretch reads CYNPWLRVQS…EQEVEVSSFA (255 aa). The helical transmembrane segment at 407-426 threads the bilayer; that stretch reads IITDSFTEVFIIFIIVLNTV. At 427–442 the chain is on the extracellular side; it reads FLAMEHHGMSMELKNV. A helical membrane pass occupies residues 443–464; the sequence is LKVANYVFTTVFVLEAILKLLA. Residues 465-472 lie on the Cytoplasmic side of the membrane; that stretch reads FNKQYFKS. The helical transmembrane segment at 473 to 491 threads the bilayer; sequence GWNICDLVVVVASLIDLGV. Residues 492–498 are Extracellular-facing; that stretch reads EGLKGVS. Residues 499 to 522 form a helical; Voltage-sensor membrane-spanning segment; it reads VFRSFRLLRVFHLAQSWTTMRLLL. At 523 to 531 the chain is on the cytoplasmic side; that stretch reads CIILNTLGS. Residues 532–553 traverse the membrane as a helical segment; the sequence is LGYLTIILIIVIYIFAVTGLQL. Residues 554–575 lie on the Extracellular side of the membrane; the sequence is FHTEYTPDKFRGEPVPRWNFND. The segment at residues 576 to 596 is an intramembrane region (pore-forming); the sequence is FLHSFMMVFRILCGEWIEPMY. Over 597–607 the chain is Extracellular; that stretch reads DCMRACNGLCF. A disulfide bridge connects residues Cys598 and Cys606. Residues 608 to 628 form a helical membrane-spanning segment; that stretch reads LIFIPVTVFGKTLFFLFIGLV. Residues 629–777 are Cytoplasmic-facing; that stretch reads LGAFGSDTVE…WNNFRRQLMM (149 aa). An III repeat occupies 770–1074; sequence NFRRQLMMVC…QNYYNTLKKL (305 aa). The chain crosses the membrane as a helical span at residues 778 to 797; sequence VCENKYFETGVLVIIFASSI. Residues 798 to 815 lie on the Extracellular side of the membrane; sequence LLAFEDIYLNEKPRLKLA. The helical transmembrane segment at 816–837 threads the bilayer; the sequence is IFYLDITFCLLFFLEMVLKLVA. Residues 838 to 846 lie on the Cytoplasmic side of the membrane; the sequence is LGFVHYYTH. Residues 847–868 form a helical membrane-spanning segment; sequence FWTILDFTIVIITVISLAASGL. Topologically, residues 869–874 are extracellular; the sequence is GMEQIT. The chain crosses the membrane as a helical; Voltage-sensor span at residues 875–898; that stretch reads AFRSLRTLRALRPLRAVSRWQGMK. Topologically, residues 899-915 are cytoplasmic; the sequence is IIVNALMLSIPSIFNVL. Residues 916–937 form a helical membrane-spanning segment; it reads LVCVVFWLIFAIMGVQLFAGKF. The Extracellular segment spans residues 938–976; sequence YKCVNETNMRIPPTEVANKIECYNKNYTWVNSNVNFDNV. N-linked (GlcNAc...) asparagine glycosylation is found at Asn942 and Asn963. Positions 977-998 form an intramembrane region, pore-forming; it reads GGAFLALFQVATFEGWMEIMAD. Over 999 to 1009 the chain is Extracellular; the sequence is AVDVTEVDEQP. A helical transmembrane segment spans residues 1010 to 1022; the sequence is KFEATVYYYFYFV. The Cytoplasmic portion of the chain corresponds to 1023 to 1100; the sequence is LFIIFGSFFV…QAVVYDLVMS (78 aa). Position 1076 is a phosphothreonine; by PKC (Thr1076). The stretch at 1083-1386 is one IV repeat; sequence VKRPKNKCQA…WEQYDPLATQ (304 aa). Residues 1101-1120 form a helical membrane-spanning segment; that stretch reads NQFEIFITTIIITNMIFMAF. Over 1121–1132 the chain is Extracellular; the sequence is EHYNQSEVVTEV. N-linked (GlcNAc...) asparagine glycosylation is present at Asn1124. Residues 1133-1154 form a helical membrane-spanning segment; sequence LATANIAFTILYAVEAIIKIIG. The Cytoplasmic portion of the chain corresponds to 1155–1162; that stretch reads LRIHYLRN. A helical membrane pass occupies residues 1163–1184; it reads LWNVFDFLVVTLSVMDAFLNDI. The Extracellular portion of the chain corresponds to 1185–1194; that stretch reads FGDGIFMNPS. Residues 1195-1218 form a helical; Voltage-sensor membrane-spanning segment; the sequence is LLRVARMFRIGRIIRLIKWAKGMR. The Cytoplasmic segment spans residues 1219-1236; that stretch reads KLLFALVISLPALFNIGA. Residues 1237-1258 form a helical membrane-spanning segment; it reads LLMLVMFIYTIIGMSSFGQIKL. The Extracellular segment spans residues 1259–1270; sequence SGALNDQVNFQT. Residues 1271–1293 constitute an intramembrane region (pore-forming); the sequence is FGKTFLLLVRLATSAGWNDILGP. Over 1294-1323 the chain is Extracellular; that stretch reads LLIQPPNCDPNYITTSTGEKIKVVNGDCGM. The helical transmembrane segment at 1324–1346 threads the bilayer; that stretch reads PWLAISYMVSYIIIVFMIVFNMY. The Cytoplasmic segment spans residues 1347–1522; sequence IAVILENFNQ…FIISAPETAV (176 aa).

The protein belongs to the sodium channel (TC 1.A.1.10) family.

The protein resides in the cell membrane. Its function is as follows. Mediates the voltage-dependent sodium ion permeability of excitable membranes. Assuming opened or closed conformations in response to the voltage difference across the membrane, the protein forms a sodium-selective channel through which Na(+) ions may pass in accordance with their electrochemical gradient. This Heterololigo bleekeri (Spear squid) protein is Sodium channel protein 1 brain.